The chain runs to 663 residues: Protein pat-12 (663 aa).

The segment covering 1-15 (MTSHIATETSVNRWS) has biased composition (polar residues). Disordered regions lie at residues 1–78 (MTSH…SGDY), 367–430 (RFEE…GQET), 517–546 (FRRG…DYRR), and 597–663 (PMPA…RRRR). Residues 367-380 (RFEETRRTEEVERR) are compositionally biased toward basic and acidic residues. Over residues 381-400 (VQRREKKERRSRHHSSSRHH) the composition is skewed to basic residues. Polar residues predominate over residues 517–526 (FRRGSQQQVS). Composition is skewed to basic and acidic residues over residues 620-640 (FNKE…KPVD) and 649-663 (NYKR…RRRR).

In terms of assembly, interacts with vab-10 (via plankin domain). In terms of tissue distribution, isoform a: Expressed in the uterus, the vulva, the rectum, mechanosensory neurons and in head and tail neurons. Isoform e: Expressed in spermatheca and weakly in the vulva. Isoform f: Expressed in spermatheca and weakly in the vulva. Isoform i: Expressed in spermatheca and weakly in the vulva.

The protein localises to the apical cell membrane. Its subcellular location is the basal cell membrane. It localises to the cytoplasm. The protein resides in the cell junction. It is found in the hemidesmosome. The protein localises to the cell membrane. Its subcellular location is the cytoskeleton. In terms of biological role, required for embryonic morphology and development. Plays both a functional and a structural role in the maintenance and probably biogenesis of fibrous organelles, a hemidesomosome-like junction structure, which ensures muscle stability and muscle connection to the external cuticle. In Caenorhabditis elegans, this protein is Protein pat-12.